The sequence spans 285 residues: Phosphatidylserine decarboxylase proenzyme (285 aa).

Active-site charge relay system; for autoendoproteolytic cleavage activity residues include D89, H146, and S252. S252 serves as the catalytic Schiff-base intermediate with substrate; via pyruvic acid; for decarboxylase activity. At S252 the chain carries Pyruvic acid (Ser); by autocatalysis.

Belongs to the phosphatidylserine decarboxylase family. PSD-B subfamily. Prokaryotic type I sub-subfamily. Heterodimer of a large membrane-associated beta subunit and a small pyruvoyl-containing alpha subunit. It depends on pyruvate as a cofactor. Post-translationally, is synthesized initially as an inactive proenzyme. Formation of the active enzyme involves a self-maturation process in which the active site pyruvoyl group is generated from an internal serine residue via an autocatalytic post-translational modification. Two non-identical subunits are generated from the proenzyme in this reaction, and the pyruvate is formed at the N-terminus of the alpha chain, which is derived from the carboxyl end of the proenzyme. The autoendoproteolytic cleavage occurs by a canonical serine protease mechanism, in which the side chain hydroxyl group of the serine supplies its oxygen atom to form the C-terminus of the beta chain, while the remainder of the serine residue undergoes an oxidative deamination to produce ammonia and the pyruvoyl prosthetic group on the alpha chain. During this reaction, the Ser that is part of the protease active site of the proenzyme becomes the pyruvoyl prosthetic group, which constitutes an essential element of the active site of the mature decarboxylase.

The protein localises to the cell membrane. The enzyme catalyses a 1,2-diacyl-sn-glycero-3-phospho-L-serine + H(+) = a 1,2-diacyl-sn-glycero-3-phosphoethanolamine + CO2. The protein operates within phospholipid metabolism; phosphatidylethanolamine biosynthesis; phosphatidylethanolamine from CDP-diacylglycerol: step 2/2. In terms of biological role, catalyzes the formation of phosphatidylethanolamine (PtdEtn) from phosphatidylserine (PtdSer). This is Phosphatidylserine decarboxylase proenzyme from Vibrio campbellii (strain ATCC BAA-1116).